The chain runs to 770 residues: Arf-GAP with coiled-coil, ANK repeat and PH domain-containing protein 2 (770 aa).

Positions 6-226 (DFEECLKDSP…MKDLGAQLDR (221 aa)) constitute a BAR domain. Residues 266–361 (GIVMEGYLFK…WIKAVQTSIA (96 aa)) form the PH domain. The disordered stretch occupies residues 371–392 (SEKLDKKSSPSTGSLDSGSESK). Positions 379-388 (SPSTGSLDSG) are enriched in low complexity. 2 positions are modified to phosphoserine: S384 and S387. The region spanning 399–520 (ESALQRVQCI…KFVDKYSTLL (122 aa)) is the Arf-GAP domain. A C4-type zinc finger spans residues 414-437 (CCDCGLADPRWASINLGITLCIEC). S521 carries the phosphoserine modification. Over residues 548-561 (TPVKSNDSGIQQCS) the composition is skewed to polar residues. Residues 548–571 (TPVKSNDSGIQQCSDDGRESLPST) are disordered. Phosphoserine is present on residues S573 and S576. ANK repeat units follow at residues 632–661 (NQAT…NVNQ), 665–694 (QGRG…NQHA), and 698–727 (EGKD…NEEM). Y734 carries the post-translational modification Phosphotyrosine. S767 carries the post-translational modification Phosphoserine.

In terms of assembly, interacts with RAB35 (GTP-bound form); the interaction is direct and probably recruits ACAP2 to membranes. Interacts with MICALL1; the interaction is indirect through RAB35.

The protein localises to the endosome membrane. The protein resides in the cell membrane. Its activity is regulated as follows. GAP activity stimulated by phosphatidylinositol 4,5-bisphosphate (PIP2) and phosphatidic acid. GTPase-activating protein (GAP) for ADP ribosylation factor 6 (ARF6). Doesn't show GAP activity for RAB35. The chain is Arf-GAP with coiled-coil, ANK repeat and PH domain-containing protein 2 (Acap2) from Rattus norvegicus (Rat).